A 281-amino-acid polypeptide reads, in one-letter code: Alcohol dehydrogenase-related 31 kDa protein (281 aa).

11 to 34 contributes to the NAD(+) binding site; the sequence is YVADCGGIALETSKVLMTKNIAKL. Residue S139 participates in substrate binding. Catalysis depends on Y152, which acts as the Proton acceptor.

It belongs to the short-chain dehydrogenases/reductases (SDR) family.

This is Alcohol dehydrogenase-related 31 kDa protein (Adhr) from Drosophila ambigua (Fruit fly).